The sequence spans 215 residues: Vesicle-trafficking protein SEC22b (215 aa).

Topologically, residues 1–194 (MVLLTMIARV…KYLNMRSTYA (194 aa)) are cytoplasmic. Residues 6 to 119 (MIARVADGLP…YSFIEFDTFI (114 aa)) enclose the Longin domain. Residue K38 is modified to N6-acetyllysine. A v-SNARE coiled-coil homology domain is found at 134 to 194 (NLGSINTELQ…KYLNMRSTYA (61 aa)). S137 bears the Phosphoserine mark. The residue at position 140 (T140) is a Phosphothreonine. Phosphoserine occurs at positions 164, 168, 174, and 177. A helical; Anchor for type IV membrane protein membrane pass occupies residues 195–215 (KLAAVAVFFIMLIVYVRFWWL).

The protein belongs to the synaptobrevin family. As to quaternary structure, interacts with STX17. Component of two distinct SNARE complexes consisting of STX5, GOSR2/BOS1, BET1 and SEC22B or STX18, USE1L, BNIP1/SEC20L and SEC22B. YKT6 can probably replace SEC22B as subunit of either complex. Interacts with the COPII Sec23/24 complex composed of SEC23A and SEC24A; recruits SEC22B into COPII-coated vesicles to allow its transport from the endoplasmic reticulum to the Golgi. Interacts with BET1.

The protein localises to the endoplasmic reticulum membrane. It localises to the endoplasmic reticulum-Golgi intermediate compartment membrane. It is found in the golgi apparatus. The protein resides in the cis-Golgi network membrane. Its subcellular location is the trans-Golgi network membrane. The protein localises to the melanosome. In terms of biological role, SNARE involved in targeting and fusion of ER-derived transport vesicles with the Golgi complex as well as Golgi-derived retrograde transport vesicles with the ER. This chain is Vesicle-trafficking protein SEC22b (Sec22b), found in Cricetulus griseus (Chinese hamster).